Reading from the N-terminus, the 354-residue chain is MGVLDIVKAGVISGDELNKVYDYAKAEGFAIPAVNVVGTDSINAVLEAAKKVNSPVIIQFSNGGAKFYAGKNCPNGEVLGAISGAKHVHLLAKAYGVPVILHTDHAARKLLPWIDGLIEANAQYKKTHGQALFSSHMLDLSEESLEENLSTCEVYLQKLDALGVALEIELGCTGGEEDGVDNTGIDNSKLYTQPEDVALAYERLGKISDKFSIAASFGNVHGVYKPGNVSLQPEILKNSQKFVKDKFALNSDKPINFVFHGGSGSELKDIKNAVSYGVIKMNIDTDTQWAFWDGVREYELKNRAYLQGQIGNPEGDDKPNKKYYDPRVWLRSGEESMIKRLEIAFEDLNCINKN.

Ser61 lines the D-glyceraldehyde 3-phosphate pocket. Asp104 acts as the Proton donor in catalysis. The Zn(2+) site is built by His105, Asp139, Glu169, and His221. Gly222 serves as a coordination point for dihydroxyacetone phosphate. Residue His260 participates in Zn(2+) binding. Dihydroxyacetone phosphate-binding positions include 261-263 and 282-285; these read GGS and NIDT.

The protein belongs to the class II fructose-bisphosphate aldolase family. In terms of assembly, homodimer. The cofactor is Zn(2+).

It catalyses the reaction beta-D-fructose 1,6-bisphosphate = D-glyceraldehyde 3-phosphate + dihydroxyacetone phosphate. The protein operates within carbohydrate degradation; glycolysis; D-glyceraldehyde 3-phosphate and glycerone phosphate from D-glucose: step 4/4. Functionally, catalyzes the aldol condensation of dihydroxyacetone phosphate (DHAP or glycerone-phosphate) with glyceraldehyde 3-phosphate (G3P) to form fructose 1,6-bisphosphate (FBP) in gluconeogenesis and the reverse reaction in glycolysis. The chain is Fructose-bisphosphate aldolase (fba) from Campylobacter jejuni subsp. jejuni serotype O:23/36 (strain 81-176).